A 63-amino-acid chain; its full sequence is Large ribosomal subunit protein bL35 (63 aa).

It belongs to the bacterial ribosomal protein bL35 family.

In Finegoldia magna (strain ATCC 29328 / DSM 20472 / WAL 2508) (Peptostreptococcus magnus), this protein is Large ribosomal subunit protein bL35.